The chain runs to 89 residues: Small ribosomal subunit protein uS15 (89 aa).

It belongs to the universal ribosomal protein uS15 family. Part of the 30S ribosomal subunit. Forms a bridge to the 50S subunit in the 70S ribosome, contacting the 23S rRNA.

In terms of biological role, one of the primary rRNA binding proteins, it binds directly to 16S rRNA where it helps nucleate assembly of the platform of the 30S subunit by binding and bridging several RNA helices of the 16S rRNA. Forms an intersubunit bridge (bridge B4) with the 23S rRNA of the 50S subunit in the ribosome. The polypeptide is Small ribosomal subunit protein uS15 (Listeria innocua serovar 6a (strain ATCC BAA-680 / CLIP 11262)).